Reading from the N-terminus, the 139-residue chain is Peptide methionine sulfoxide reductase MsrB (139 aa).

The MsrB domain occupies aspartate 8–glutamine 130. The Zn(2+) site is built by cysteine 47, cysteine 50, cysteine 96, and cysteine 99. Cysteine 119 functions as the Nucleophile in the catalytic mechanism.

The protein belongs to the MsrB Met sulfoxide reductase family. Requires Zn(2+) as cofactor.

The catalysed reaction is L-methionyl-[protein] + [thioredoxin]-disulfide + H2O = L-methionyl-(R)-S-oxide-[protein] + [thioredoxin]-dithiol. The sequence is that of Peptide methionine sulfoxide reductase MsrB from Acinetobacter baumannii (strain SDF).